A 624-amino-acid polypeptide reads, in one-letter code: (-)-beta-phellandrene synthase 1, chloroplastic (624 aa).

The N-terminal 48 residues, 1 to 48 (MAIVSSVPLASKSCLHKSLISSIHKLKPFCRTIPTLGMSRPGKYVMPS), are a transit peptide targeting the chloroplast. Residues Asp-375, Asp-379, and Asp-527 each coordinate Mg(2+). The short motif at 375–379 (DDMYD) is the DDXXD motif element.

The protein belongs to the terpene synthase family. Tpsd subfamily. Mg(2+) serves as cofactor. The cofactor is Mn(2+).

The protein resides in the plastid. The protein localises to the chloroplast. The catalysed reaction is (2E)-geranyl diphosphate = (-)-beta-phellandrene + diphosphate. It functions in the pathway terpene metabolism; oleoresin biosynthesis. In terms of biological role, terpene synthase (TPS) involved in the biosynthesis of monoterpene natural products included in conifer oleoresin secretions and volatile emissions; these compounds contribute to biotic and abiotic stress defense against herbivores and pathogens. Catalyzes the conversion of (2E)-geranyl diphosphate (GPP) to (-)-beta-phellandrene. This is (-)-beta-phellandrene synthase 1, chloroplastic from Picea sitchensis (Sitka spruce).